The chain runs to 245 residues: Orotidine 5'-phosphate decarboxylase (245 aa).

Substrate is bound by residues D22, K44, D71–T80, T131, R192, Q201, G221, and R222. K73 serves as the catalytic Proton donor.

The protein belongs to the OMP decarboxylase family. Type 1 subfamily. As to quaternary structure, homodimer.

The enzyme catalyses orotidine 5'-phosphate + H(+) = UMP + CO2. The protein operates within pyrimidine metabolism; UMP biosynthesis via de novo pathway; UMP from orotate: step 2/2. Its function is as follows. Catalyzes the decarboxylation of orotidine 5'-monophosphate (OMP) to uridine 5'-monophosphate (UMP). This is Orotidine 5'-phosphate decarboxylase from Yersinia pseudotuberculosis serotype O:3 (strain YPIII).